Consider the following 454-residue polypeptide: Bifunctional protein GlmU (454 aa).

The segment at 1-229 (MQRYAVVLAA…FDEIMGVNDR (229 aa)) is pyrophosphorylase. UDP-N-acetyl-alpha-D-glucosamine is bound by residues 8-11 (LAAG), Lys-22, Gln-72, and 77-78 (GT). A Mg(2+)-binding site is contributed by Asp-102. Residues Gly-139, Glu-154, and Asn-227 each contribute to the UDP-N-acetyl-alpha-D-glucosamine site. Asn-227 lines the Mg(2+) pocket. The segment at 230-250 (VALSKAEQAMRQRINEYHMRN) is linker. The interval 251 to 454 (GVTLIDPSST…KPGYLNKNKE (204 aa)) is N-acetyltransferase. Residues Arg-332 and Lys-350 each coordinate UDP-N-acetyl-alpha-D-glucosamine. Residue His-362 is the Proton acceptor of the active site. UDP-N-acetyl-alpha-D-glucosamine contacts are provided by Tyr-365 and Asn-376. Acetyl-CoA-binding positions include 385 to 386 (NY), Ala-422, and Arg-439.

This sequence in the N-terminal section; belongs to the N-acetylglucosamine-1-phosphate uridyltransferase family. It in the C-terminal section; belongs to the transferase hexapeptide repeat family. As to quaternary structure, homotrimer. It depends on Mg(2+) as a cofactor.

It localises to the cytoplasm. It catalyses the reaction alpha-D-glucosamine 1-phosphate + acetyl-CoA = N-acetyl-alpha-D-glucosamine 1-phosphate + CoA + H(+). It carries out the reaction N-acetyl-alpha-D-glucosamine 1-phosphate + UTP + H(+) = UDP-N-acetyl-alpha-D-glucosamine + diphosphate. It functions in the pathway nucleotide-sugar biosynthesis; UDP-N-acetyl-alpha-D-glucosamine biosynthesis; N-acetyl-alpha-D-glucosamine 1-phosphate from alpha-D-glucosamine 6-phosphate (route II): step 2/2. The protein operates within nucleotide-sugar biosynthesis; UDP-N-acetyl-alpha-D-glucosamine biosynthesis; UDP-N-acetyl-alpha-D-glucosamine from N-acetyl-alpha-D-glucosamine 1-phosphate: step 1/1. Its pathway is bacterial outer membrane biogenesis; LPS lipid A biosynthesis. In terms of biological role, catalyzes the last two sequential reactions in the de novo biosynthetic pathway for UDP-N-acetylglucosamine (UDP-GlcNAc). The C-terminal domain catalyzes the transfer of acetyl group from acetyl coenzyme A to glucosamine-1-phosphate (GlcN-1-P) to produce N-acetylglucosamine-1-phosphate (GlcNAc-1-P), which is converted into UDP-GlcNAc by the transfer of uridine 5-monophosphate (from uridine 5-triphosphate), a reaction catalyzed by the N-terminal domain. This is Bifunctional protein GlmU from Staphylococcus carnosus (strain TM300).